Here is a 167-residue protein sequence, read N- to C-terminus: MFQTLDHFLKSWEFEADATQKLLNSLTDESLKQEITSQNWTLGRIAWHTVAAIGIITSNTDLTFQAPAEDYPVPTSAQFIADSYHQASNAFVQALKTQWTDHTLQERINFIGQQMPNGSLLMFLIQHQNHHRGQMTVLMRQAGLTVPGIYGPAKEEWAKFGLEAPKM.

A divalent metal cation is bound by residues H48, H127, and H131.

The protein belongs to the DinB family.

This is an uncharacterized protein from Bacillus subtilis (strain 168).